The primary structure comprises 512 residues: Glycerol kinase (512 aa).

Thr13 contacts ADP. Residues Thr13, Thr14, and Ser15 each contribute to the ATP site. Thr13 lines the sn-glycerol 3-phosphate pocket. Residue Arg17 participates in ADP binding. 4 residues coordinate sn-glycerol 3-phosphate: Arg83, Glu84, Tyr135, and Asp252. Glycerol contacts are provided by Arg83, Glu84, Tyr135, Asp252, and Gln253. Residues Thr274 and Gly318 each contribute to the ADP site. ATP-binding residues include Thr274, Gly318, Gln322, and Gly419. The ADP site is built by Gly419 and Asn423.

It belongs to the FGGY kinase family.

It catalyses the reaction glycerol + ATP = sn-glycerol 3-phosphate + ADP + H(+). It functions in the pathway polyol metabolism; glycerol degradation via glycerol kinase pathway; sn-glycerol 3-phosphate from glycerol: step 1/1. Inhibited by fructose 1,6-bisphosphate (FBP). In terms of biological role, key enzyme in the regulation of glycerol uptake and metabolism. Catalyzes the phosphorylation of glycerol to yield sn-glycerol 3-phosphate. The chain is Glycerol kinase from Corynebacterium kroppenstedtii (strain DSM 44385 / JCM 11950 / CIP 105744 / CCUG 35717).